The sequence spans 405 residues: uncharacterized protein (405 aa).

13 consecutive transmembrane segments (helical) span residues 19–39 (IVSI…PLAV), 48–68 (MGFS…ATLL), 85–105 (IVVF…LADI), 106–126 (ASAW…ILGI), 129–149 (SFAG…LHIG), 156–176 (GIVT…CYAW), 178–198 (GLQG…LLAL), 224–244 (GMAL…ITLF), 252–272 (GAAF…LLFP), 283–303 (VAMI…TAAM), 309–329 (IGVL…GVVA), 344–364 (TYTV…GLVM), and 366–386 (WAGV…ALLL).

Belongs to the major facilitator superfamily. YhhS family.

The protein localises to the cell inner membrane. This is an uncharacterized protein from Salmonella paratyphi C (strain RKS4594).